The sequence spans 356 residues: Phosphoribosylformylglycinamidine cyclo-ligase (356 aa).

This sequence belongs to the AIR synthase family.

The protein localises to the cytoplasm. It carries out the reaction 2-formamido-N(1)-(5-O-phospho-beta-D-ribosyl)acetamidine + ATP = 5-amino-1-(5-phospho-beta-D-ribosyl)imidazole + ADP + phosphate + H(+). It functions in the pathway purine metabolism; IMP biosynthesis via de novo pathway; 5-amino-1-(5-phospho-D-ribosyl)imidazole from N(2)-formyl-N(1)-(5-phospho-D-ribosyl)glycinamide: step 2/2. The chain is Phosphoribosylformylglycinamidine cyclo-ligase from Nitrobacter hamburgensis (strain DSM 10229 / NCIMB 13809 / X14).